Reading from the N-terminus, the 185-residue chain is Peptidyl-tRNA hydrolase (185 aa).

Tyr-14 lines the tRNA pocket. His-19 (proton acceptor) is an active-site residue. Residues Tyr-65, Asn-67, and Asn-113 each contribute to the tRNA site.

Belongs to the PTH family. In terms of assembly, monomer.

Its subcellular location is the cytoplasm. It carries out the reaction an N-acyl-L-alpha-aminoacyl-tRNA + H2O = an N-acyl-L-amino acid + a tRNA + H(+). Hydrolyzes ribosome-free peptidyl-tRNAs (with 1 or more amino acids incorporated), which drop off the ribosome during protein synthesis, or as a result of ribosome stalling. Its function is as follows. Catalyzes the release of premature peptidyl moieties from peptidyl-tRNA molecules trapped in stalled 50S ribosomal subunits, and thus maintains levels of free tRNAs and 50S ribosomes. The sequence is that of Peptidyl-tRNA hydrolase from Rickettsia akari (strain Hartford).